The primary structure comprises 155 residues: Endoribonuclease YbeY (155 aa).

Positions 116, 120, and 126 each coordinate Zn(2+).

It belongs to the endoribonuclease YbeY family. The cofactor is Zn(2+).

It localises to the cytoplasm. Single strand-specific metallo-endoribonuclease involved in late-stage 70S ribosome quality control and in maturation of the 3' terminus of the 16S rRNA. The protein is Endoribonuclease YbeY of Colwellia psychrerythraea (strain 34H / ATCC BAA-681) (Vibrio psychroerythus).